The following is a 332-amino-acid chain: Homeobox protein DLX-2 (332 aa).

The segment covering 19–28 (ASSTYHQHQQ) has biased composition (polar residues). Residues 19-83 (ASSTYHQHQQ…QHPAGGGGGG (65 aa)) are disordered. The span at 40 to 49 (NSNSSSSNSS) shows a compositional bias: low complexity. Residues 55 to 75 (ESPTLPVSTATDSSYYTNQQH) show a composition bias toward polar residues. The homeobox DNA-binding region spans 155 to 214 (VRKPRTIYSSFQLAALQRRFQKTQYLALPERAELAASLGLTQTQVKIWFQNRRSKFKKMW). Disordered regions lie at residues 219-272 (IPTE…SSPS) and 304-332 (PSQTPQAHHHHHHHHHAGGGAPVSAGTIF). Ser235 is modified (phosphoserine). Over residues 253–266 (AGGGPGSGGGGAGS) the composition is skewed to gly residues. Positions 310-320 (AHHHHHHHHHA) are enriched in basic residues.

This sequence belongs to the distal-less homeobox family. As to quaternary structure, interacts (via homeobox DNA-binding domain) with POU4F2; this interaction enhances retinal ganglion cell (RGC) differentiation. Phosphorylated by serine/threonine kinases. In terms of tissue distribution, expressed only in neural and other ectodermal structures of the head: the brain, the vomeronasal organ, and the preameloblasts of the teeth. Primarily expressed in the germinal cells of the ventral forebrain in the midgestational embryo, and in both dorsal and ventral ventricular zones in late embryogenesis and early postnatal life. Expressed in the inner nuclear layer of the retina.

It localises to the nucleus. Acts as a transcriptional activator. Activates transcription of CGA/alpha-GSU, via binding to the downstream activin regulatory element (DARE) in the gene promoter. Plays a role in terminal differentiation of interneurons, such as amacrine and bipolar cells in the developing retina. Likely to play a regulatory role in the development of the ventral forebrain. May play a role in craniofacial patterning and morphogenesis. The polypeptide is Homeobox protein DLX-2 (Dlx2) (Mus musculus (Mouse)).